Reading from the N-terminus, the 293-residue chain is Probable rRNA-processing protein EBP2 homolog (293 aa).

A compositionally biased stretch (acidic residues) spans 1 to 37; sequence MSLEEDIVSDDEMNMIDEDDATDSEAESLSDSDTENE. Disordered regions lie at residues 1-45 and 150-293; these read MSLE…LAEP and IEES…RQKR. Residues 135 to 190 are a coiled coil; the sequence is HMEKVKSRLLHEKKQIEESEERRKARDNKRMAKEVQSQKMKERAKEKKDNIESVKK. Basic and acidic residues-rich tracts occupy residues 150-167, 173-189, and 247-256; these read IEES…RMAK, KMKE…ESVK, and KKREFRDSKF. Residues 265–275 show a composition bias toward polar residues; it reads SKQNTAETTND.

It belongs to the EBP2 family. Interacts with NSN1.

The protein resides in the nucleus. The protein localises to the nucleolus. In terms of biological role, required for the processing of the 27S pre-rRNA. Plays an important role in plant growth and senescence by modulating ribosome biogenesis in nucleolus. Associates with ribosomes. The polypeptide is Probable rRNA-processing protein EBP2 homolog (Arabidopsis thaliana (Mouse-ear cress)).